Reading from the N-terminus, the 367-residue chain is Histidinol-phosphate aminotransferase 1 (367 aa).

Lysine 226 carries the N6-(pyridoxal phosphate)lysine modification.

The protein belongs to the class-II pyridoxal-phosphate-dependent aminotransferase family. Histidinol-phosphate aminotransferase subfamily. As to quaternary structure, homodimer. The cofactor is pyridoxal 5'-phosphate.

It carries out the reaction L-histidinol phosphate + 2-oxoglutarate = 3-(imidazol-4-yl)-2-oxopropyl phosphate + L-glutamate. The protein operates within amino-acid biosynthesis; L-histidine biosynthesis; L-histidine from 5-phospho-alpha-D-ribose 1-diphosphate: step 7/9. This Haemophilus influenzae (strain ATCC 51907 / DSM 11121 / KW20 / Rd) protein is Histidinol-phosphate aminotransferase 1 (hisC1).